We begin with the raw amino-acid sequence, 305 residues long: Homoserine O-acetyltransferase (305 aa).

The Acyl-thioester intermediate role is filled by Cys142. The substrate site is built by Lys163 and Ser192. The active-site Proton acceptor is His235. Residue Glu237 is part of the active site. Arg249 provides a ligand contact to substrate.

Belongs to the MetA family.

The protein resides in the cytoplasm. The enzyme catalyses L-homoserine + acetyl-CoA = O-acetyl-L-homoserine + CoA. Its pathway is amino-acid biosynthesis; L-methionine biosynthesis via de novo pathway; O-acetyl-L-homoserine from L-homoserine: step 1/1. Functionally, transfers an acetyl group from acetyl-CoA to L-homoserine, forming acetyl-L-homoserine. The protein is Homoserine O-acetyltransferase of Roseobacter denitrificans (strain ATCC 33942 / OCh 114) (Erythrobacter sp. (strain OCh 114)).